A 90-amino-acid chain; its full sequence is Long neurotoxin 7 (90 aa).

The N-terminal stretch at 1-21 (MKTLLLTLVLVTIMCLDLGYT) is a signal peptide. Cystine bridges form between C24/C41, C35/C62, C47/C51, C66/C77, and C78/C83.

This sequence belongs to the three-finger toxin family. Long-chain subfamily. Type II alpha-neurotoxin sub-subfamily. In terms of tissue distribution, expressed by the venom gland.

The protein localises to the secreted. Its function is as follows. Binds with high affinity to muscular (alpha-1/CHRNA1) and neuronal (alpha-7/CHRNA7) nicotinic acetylcholine receptor (nAChR) and inhibits acetylcholine from binding to the receptor, thereby impairing neuromuscular and neuronal transmission. This Naja sputatrix (Malayan spitting cobra) protein is Long neurotoxin 7.